Reading from the N-terminus, the 846-residue chain is Protein kintoun (846 aa).

Disordered regions lie at residues 1-21 (MSTA…ERAD), 372-416 (YLSR…PALT), 581-657 (HTSI…DSTI), and 743-846 (HDSS…DDEI). Position 378 is a phosphoserine (S378). Over residues 389 to 403 (PVEDDADGDMPETPE) the composition is skewed to acidic residues. Composition is skewed to basic residues over residues 596–612 (LHKK…KKQR) and 750–766 (QRKK…RAQQ). S770 bears the Phosphoserine mark. The span at 821–832 (TRQDHADADAKN) shows a compositional bias: basic and acidic residues.

It belongs to the PIH1 family. Kintoun subfamily. In terms of assembly, interacts with Pp1alpha-96A, Pp1-87B, Pp1-13C and flw.

It localises to the cytoplasm. Its function is as follows. Required for cytoplasmic pre-assembly of axonemal dyneins, thereby playing a central role in motility in cilia and flagella. Involved in pre-assembly of dynein arm complexes in the cytoplasm before intraflagellar transport loads them for the ciliary compartment. This is Protein kintoun from Drosophila persimilis (Fruit fly).